The following is a 312-amino-acid chain: Protein phosphatase 2A catalytic subunit B (312 aa).

D55, H57, D83, and N115 together coordinate Mn(2+). The active-site Proton donor is the H116. Mn(2+) contacts are provided by H165 and H240.

The protein belongs to the PPP phosphatase family. PP-2A subfamily. In terms of assembly, component of the Sca1 complex composed of at least gefA, gefH, scaA, phr, and the protein phosphatase 2A subunits pppA and pho2B. Mn(2+) serves as cofactor.

It is found in the cell membrane. The catalysed reaction is O-phospho-L-seryl-[protein] + H2O = L-seryl-[protein] + phosphate. It catalyses the reaction O-phospho-L-threonyl-[protein] + H2O = L-threonyl-[protein] + phosphate. Its function is as follows. Component of the Sca1 complex, a regulator of cell motility, chemotaxis and signal relay. The Sca1 complex is recruited to the plasma membrane in a chemoattractant- and F-actin-dependent manner and is enriched at the leading edge of chemotaxing cells where it regulates F-actin dynamics and signal relay by controlling the activation of rasC and the downstream target of rapamycin complex 2 (TORC2)-Akt/protein kinase B (PKB) pathway. This chain is Protein phosphatase 2A catalytic subunit B, found in Dictyostelium discoideum (Social amoeba).